Consider the following 351-residue polypeptide: Uroporphyrinogen decarboxylase (351 aa).

Residues 26 to 30 (RQAGR), Phe45, Asp76, Tyr153, Ser208, and His323 contribute to the substrate site.

This sequence belongs to the uroporphyrinogen decarboxylase family. In terms of assembly, homodimer.

Its subcellular location is the cytoplasm. The catalysed reaction is uroporphyrinogen III + 4 H(+) = coproporphyrinogen III + 4 CO2. It participates in porphyrin-containing compound metabolism; protoporphyrin-IX biosynthesis; coproporphyrinogen-III from 5-aminolevulinate: step 4/4. Functionally, catalyzes the decarboxylation of four acetate groups of uroporphyrinogen-III to yield coproporphyrinogen-III. The chain is Uroporphyrinogen decarboxylase from Prochlorococcus marinus (strain SARG / CCMP1375 / SS120).